Reading from the N-terminus, the 259-residue chain is NAD kinase (259 aa).

The active-site Proton acceptor is aspartate 43. Residues 43–44, 111–112, and arginine 136 each bind NAD(+); these read DG and NE.

The protein belongs to the NAD kinase family. Requires a divalent metal cation as cofactor.

It localises to the cytoplasm. The enzyme catalyses NAD(+) + ATP = ADP + NADP(+) + H(+). Involved in the regulation of the intracellular balance of NAD and NADP, and is a key enzyme in the biosynthesis of NADP. Catalyzes specifically the phosphorylation on 2'-hydroxyl of the adenosine moiety of NAD to yield NADP. In Mycoplasma pneumoniae (strain ATCC 29342 / M129 / Subtype 1) (Mycoplasmoides pneumoniae), this protein is NAD kinase.